Consider the following 217-residue polypeptide: Small ribosomal subunit protein uS3 (217 aa).

The 69-residue stretch at 29–97 (ADYLHEDLAI…AQLNKLTGKQ (69 aa)) folds into the KH type-2 domain.

This sequence belongs to the universal ribosomal protein uS3 family. In terms of assembly, part of the 30S ribosomal subunit. Forms a tight complex with proteins S10 and S14.

In terms of biological role, binds the lower part of the 30S subunit head. Binds mRNA in the 70S ribosome, positioning it for translation. In Streptococcus mutans serotype c (strain ATCC 700610 / UA159), this protein is Small ribosomal subunit protein uS3.